We begin with the raw amino-acid sequence, 408 residues long: Mitochondrial outer membrane protein SLC25A46 (408 aa).

Disordered regions lie at residues Met1 to Cys23 and His52 to Gly80. Residues Leu66–Gly76 show a composition bias toward low complexity. A Solcar 1 repeat occupies Gln86–Pro177. 6 helical membrane passes run Phe93–Leu113, Phe157–Pro177, Ile189–Ala209, Leu248–Ile268, Phe304–Leu324, and Leu373–Leu393. One copy of the Solcar 2 repeat lies at Asp301–Leu403.

It belongs to the mitochondrial carrier (TC 2.A.29) family.

The protein resides in the mitochondrion outer membrane. Its function is as follows. Transmembrane protein of the mitochondrial outer membrane that controls mitochondrial organization. May regulate the assembly of the MICOS (mitochondrial contact site and cristae organizing system) complex which is essential to the biogenesis and dynamics of mitochondrial cristae, the inwards folds of the inner mitochondrial membrane. Through its interaction with the EMC (endoplasmic reticulum membrane protein complex), could regulate mitochondrial lipid homeostasis and thereby mitochondrial fission. This Gallus gallus (Chicken) protein is Mitochondrial outer membrane protein SLC25A46.